A 649-amino-acid polypeptide reads, in one-letter code: Protein translocase subunit SecA 2 (649 aa).

ATP contacts are provided by residues Q105, 123-127, and D535; that span reads GEGKT.

It belongs to the SecA family. Monomer and homodimer. Part of the essential Sec protein translocation apparatus which comprises SecA, SecYEG and auxiliary proteins SecDF-YajC and YidC.

It is found in the cell inner membrane. The protein resides in the cytoplasm. It carries out the reaction ATP + H2O + cellular proteinSide 1 = ADP + phosphate + cellular proteinSide 2.. Part of the Sec protein translocase complex. Interacts with the SecYEG preprotein conducting channel. Has a central role in coupling the hydrolysis of ATP to the transfer of proteins into and across the cell membrane, serving both as a receptor for the preprotein-SecB complex and as an ATP-driven molecular motor driving the stepwise translocation of polypeptide chains across the membrane. The polypeptide is Protein translocase subunit SecA 2 (Magnetococcus marinus (strain ATCC BAA-1437 / JCM 17883 / MC-1)).